Reading from the N-terminus, the 230-residue chain is 7-cyano-7-deazaguanine synthase (230 aa).

Position 7–17 (7–17 (CSGGLDSVSLA)) interacts with ATP. Zn(2+) is bound by residues Cys-185, Cys-193, Cys-196, and Cys-199.

Belongs to the QueC family. Zn(2+) is required as a cofactor.

The catalysed reaction is 7-carboxy-7-deazaguanine + NH4(+) + ATP = 7-cyano-7-deazaguanine + ADP + phosphate + H2O + H(+). The protein operates within purine metabolism; 7-cyano-7-deazaguanine biosynthesis. Functionally, catalyzes the ATP-dependent conversion of 7-carboxy-7-deazaguanine (CDG) to 7-cyano-7-deazaguanine (preQ(0)). This Ruegeria pomeroyi (strain ATCC 700808 / DSM 15171 / DSS-3) (Silicibacter pomeroyi) protein is 7-cyano-7-deazaguanine synthase.